Here is a 357-residue protein sequence, read N- to C-terminus: Peptide chain release factor 1 (357 aa).

The residue at position 236 (Gln236) is an N5-methylglutamine.

Belongs to the prokaryotic/mitochondrial release factor family. Methylated by PrmC. Methylation increases the termination efficiency of RF1.

The protein resides in the cytoplasm. Its function is as follows. Peptide chain release factor 1 directs the termination of translation in response to the peptide chain termination codons UAG and UAA. The chain is Peptide chain release factor 1 from Mycolicibacterium paratuberculosis (strain ATCC BAA-968 / K-10) (Mycobacterium paratuberculosis).